The following is a 619-amino-acid chain: Probable ATP-dependent RNA helicase DDX59 (619 aa).

Residue K26 forms a Glycyl lysine isopeptide (Lys-Gly) (interchain with G-Cter in SUMO2) linkage. The tract at residues 57 to 98 is disordered; sequence SESCPFPSPGGQLAEVHSVSPEQGAKDSHPSEEPVKSFSKTQ. S64 and S76 each carry phosphoserine. Basic and acidic residues predominate over residues 80–91; that stretch reads GAKDSHPSEEPV. The HIT-type zinc finger occupies 104-133; sequence GEPICVVCGRYGEYICDKTDEDVCSLECKA. The interval 142 to 161 is disordered; the sequence is KEEKSKLSNPQKADSEPESP. Phosphoserine is present on residues S156 and S160. Residues 203-231 carry the Q motif motif; sequence IDFEHCSLPEVLNHNLKKSGYEVPTPIQM. A Helicase ATP-binding domain is found at 234-405; it reads IPVGLLGRDI…SQLLHNPVRI (172 aa). 247–254 is an ATP binding site; the sequence is ADTGSGKT. The DEAD box signature appears at 353 to 356; it reads DEAD. The region spanning 416 to 579 is the Helicase C-terminal domain; sequence NVRQIILWVE…ILPPQLLNSP (164 aa).

Belongs to the DEAD box helicase family. DDX59 subfamily. In terms of assembly, interacts (via HIT-type zinc finger) with the RUVBL1/RUVBL2 complex in the presence of ADP. In terms of tissue distribution, expressed in fibroblasts (at protein level).

Its subcellular location is the cytoplasm. It localises to the nucleus. The catalysed reaction is ATP + H2O = ADP + phosphate + H(+). In Homo sapiens (Human), this protein is Probable ATP-dependent RNA helicase DDX59 (DDX59).